The primary structure comprises 140 residues: MSTIRCDIVSAEKEIFHGEATLVVATGELGELGIAPKHAPLITRLKPGKVVVTTANGEHLDFAISGGILEVQPQVVTILVDTAVRAQDIEEAAVRKVKEEAERLLANRGNTVDVAEAQRRLTEATVQLQALERLRRNLKH.

Belongs to the ATPase epsilon chain family. F-type ATPases have 2 components, CF(1) - the catalytic core - and CF(0) - the membrane proton channel. CF(1) has five subunits: alpha(3), beta(3), gamma(1), delta(1), epsilon(1). CF(0) has three main subunits: a, b and c.

It is found in the cell inner membrane. In terms of biological role, produces ATP from ADP in the presence of a proton gradient across the membrane. In Xanthomonas oryzae pv. oryzae (strain MAFF 311018), this protein is ATP synthase epsilon chain.